The sequence spans 169 residues: Peptide deformylase (169 aa).

Residues cysteine 91 and histidine 133 each coordinate Fe cation. The active site involves glutamate 134. Histidine 137 contributes to the Fe cation binding site.

This sequence belongs to the polypeptide deformylase family. Requires Fe(2+) as cofactor.

The catalysed reaction is N-terminal N-formyl-L-methionyl-[peptide] + H2O = N-terminal L-methionyl-[peptide] + formate. Removes the formyl group from the N-terminal Met of newly synthesized proteins. Requires at least a dipeptide for an efficient rate of reaction. N-terminal L-methionine is a prerequisite for activity but the enzyme has broad specificity at other positions. This chain is Peptide deformylase, found in Haemophilus influenzae (strain 86-028NP).